Consider the following 902-residue polypeptide: U3 small nucleolar RNA-associated protein 21 homolog (902 aa).

14 WD repeats span residues 40–71, 80–110, 119–154, 164–198, 206–243, 249–284, 289–332, 339–373, 399–438, 447–481, 492–528, 533–568, 570–611, and 613–651; these read DIEARGTHFLVTTSVGNTFQTYDCEKLNLLFV, TCLKSFKDFMLVAAGSKIFAYKRGKIIWDID, THLDAFGEWIIACTSSRHVYVWKHASKYSVPELHTT, TSLLHPSTYLNKILLGFSDGALQIWNLRVSKRVHE, GITSLTQAPVLDVLAVGTISGRIVIFNLKNGSILMEFK, LSCSFRTDGTPILASSNPIGDLSFWDLSKRRIQNVT, FGSL…RSRN, SFVKFYGKSVHFLISAATDRSLRAVSLYQDSQSTE, TALSSSNTREKYWDNVLTAHKNDSSARTWNWKSKTLGQHV, VRSVCVSCCGNFGLIGSSKGVVDVYNMQSGIKRKS, VTAVMLDNVNRILVTASLDGILKFWDFNKGNLIDSLD, ITHAIYQHSSDLVAVACDDFGIRIVDVQTRKIVREL, GHSN…DSIS, and PSVCTSLTFAPTGDYLATTHVDQVGISLWTNLSMFKHVS.

Interacts with snoRNA U3. Interacts with MPP10. Component of the ribosomal small subunit (SSU) processome composed of at least 40 protein subunits and snoRNA U3.

The protein localises to the nucleus. It is found in the nucleolus. In terms of biological role, involved in nucleolar processing of pre-18S ribosomal RNA and ribosome assembly. The sequence is that of U3 small nucleolar RNA-associated protein 21 homolog from Schizosaccharomyces pombe (strain 972 / ATCC 24843) (Fission yeast).